Here is a 566-residue protein sequence, read N- to C-terminus: SRSF protein kinase 3 (566 aa).

Residues 1-13 are compositionally biased toward gly residues; that stretch reads MSASTGGGGGGDS. Positions 1 to 60 are disordered; it reads MSASTGGGGGGDSGSSSSSSSQASCGPEPSGSELAPPTPAPRMLQGLLGSDDEEQEDPKD. A compositionally biased stretch (low complexity) spans 14–26; it reads GSSSSSSSQASCG. A Phosphoserine modification is found at serine 50. The 486-residue stretch at 79–564 folds into the Protein kinase domain; sequence YHVVRKLGWG…AADCLQHPWL (486 aa). ATP is bound by residues 85–93 and lysine 108; that span reads LGWGHFSTV. Aspartate 212 acts as the Proton acceptor in catalysis. The span at 236 to 254 shows a compositional bias: polar residues; sequence EWQQSGAPPPSRSTVSTAP. Disordered stretches follow at residues 236–283 and 295–353; these read EWQQ…LLEE and EAAA…SGFS. The span at 263–278 shows a compositional bias: basic residues; that stretch reads SKNKRKKMRRKRKQQK. The residue at position 329 (serine 329) is a Phosphoserine. Residues 330-339 are compositionally biased toward low complexity; it reads PASSSPAPGG. The segment covering 344-353 has biased composition (polar residues); it reads SPGSQTSGFS.

Belongs to the protein kinase superfamily. Highly expressed in skeletal muscle, heart, uterus and parorchis. Weakly expressed in brain, stomach, small intestine and ovary.

The protein localises to the nucleus. It is found in the cytoplasm. The catalysed reaction is L-seryl-[protein] + ATP = O-phospho-L-seryl-[protein] + ADP + H(+). The enzyme catalyses L-threonyl-[protein] + ATP = O-phospho-L-threonyl-[protein] + ADP + H(+). Serine/arginine-rich protein-specific kinase which specifically phosphorylates its substrates at serine residues located in regions rich in arginine/serine dipeptides, known as RS domains. Phosphorylates the SR splicing factor SRSF1 and the lamin-B receptor (LBR) in vitro. Required for normal muscle development. This Sus scrofa (Pig) protein is SRSF protein kinase 3 (SRPK3).